The chain runs to 494 residues: Putative bifunctional dihydrofolate reductase-thymidylate synthase (494 aa).

Positions 1-167 constitute a DHFR domain; it reads MGIGKDGTLP…IKHSFISFVR (167 aa). 2-8 provides a ligand contact to NADP(+); that stretch reads GIGKDGT. Position 16 (D16) interacts with substrate. NADP(+) contacts are provided by residues 40–42 and 61–64; these read RKT and LTRS. I103 serves as a coordination point for substrate. Residue 104 to 111 coordinates NADP(+); it reads GGGEILRQ. T124 is a substrate binding site. The thymidylate synthase stretch occupies residues 170–494; sequence KSIAEANDSS…HHKIEMKMAV (325 aa). R231 is a binding site for dUMP. The active site involves C376. DUMP contacts are provided by residues H377, 395 to 399, N407, and 437 to 439; these read QRSAD and HVY.

It in the N-terminal section; belongs to the dihydrofolate reductase family. The protein in the C-terminal section; belongs to the thymidylate synthase family.

It carries out the reaction (6S)-5,6,7,8-tetrahydrofolate + NADP(+) = 7,8-dihydrofolate + NADPH + H(+). The enzyme catalyses dUMP + (6R)-5,10-methylene-5,6,7,8-tetrahydrofolate = 7,8-dihydrofolate + dTMP. Its pathway is cofactor biosynthesis; tetrahydrofolate biosynthesis; 5,6,7,8-tetrahydrofolate from 7,8-dihydrofolate: step 1/1. Its function is as follows. Bifunctional enzyme. Involved in de novo dTMP biosynthesis. Key enzyme in folate metabolism. Can play two different roles depending on the source of dihydrofolate: de novo synthesis of tetrahydrofolate or recycling of the dihydrofolate released as one of the end products of the TS catalyzed reaction. Catalyzes an essential reaction for de novo glycine and purine synthesis, DNA precursor synthesis, and for the conversion of dUMP to dTMP. This is Putative bifunctional dihydrofolate reductase-thymidylate synthase from Oryza sativa subsp. japonica (Rice).